Reading from the N-terminus, the 139-residue chain is MELREKILERIKVTSSGCWEWQGATNNKGYGQVWCSNTGKVVYCHRVMSNAPKGSTVLHSCDNPLCCNPEHLSIGTPKENSTDMVNKGRSHKGYKLSDEDVMAIMESSESNVSLARTYGVSQQTICDIRKGRRHGRLRR.

The chain is Protein 2.8 from Escherichia phage T7 (Bacteriophage T7).